Consider the following 559-residue polypeptide: POU domain protein 1 (559 aa).

Positions Glu259 to Asp333 constitute a POU-specific domain. A DNA-binding region (homeobox) is located at residues Lys351–Thr410.

It belongs to the POU transcription factor family.

Its subcellular location is the nucleus. The sequence is that of POU domain protein 1 (POU1) from Dugesia japonica (Planarian).